We begin with the raw amino-acid sequence, 1034 residues long: AP-3 complex subunit delta (1034 aa).

10 HEAT repeats span residues K35–D72, D143–E180, A181–K217, Y219–R255, K258–N297, S299–K337, S338–L374, E376–T414, N415–V452, and N570–Q609. Disordered regions lie at residues D637–K660, Q669–P688, E701–Q723, and Q758–L1034. A Phosphoserine modification is found at S683. T687 is modified (phosphothreonine). Basic residues predominate over residues G769–N784. Basic and acidic residues-rich tracts occupy residues K822 to D836 and K882 to A906. The segment covering S928–D942 has biased composition (low complexity). The segment covering K986–K1003 has biased composition (basic residues). Positions E1007 to S1016 are enriched in low complexity. Positions G1025–L1034 are enriched in polar residues.

It belongs to the adaptor complexes large subunit family. In terms of assembly, adaptor protein complex 3 (AP-3) is a heterotetramer composed of two large chains (delta and beta3), a medium chain (mu3) and a small chain (sigma3).

The protein localises to the cytoplasmic vesicle. It localises to the clathrin-coated vesicle membrane. It is found in the golgi apparatus. In terms of biological role, part of the AP-3 complex, an adapter-related complex which is not clathrin-associated. The complex is associated with the Golgi region as well as more peripheral structures. It facilitates the budding of vesicles from the Golgi membrane and may be directly involved in trafficking to lysosomes. Its function is as follows. May be a coat protein involved in the formation of specialized structures like pigment granules. The chain is AP-3 complex subunit delta (g) from Drosophila melanogaster (Fruit fly).